The sequence spans 128 residues: Holo-[acyl-carrier-protein] synthase (128 aa).

Mg(2+) contacts are provided by D8 and E57.

This sequence belongs to the P-Pant transferase superfamily. AcpS family. Mg(2+) is required as a cofactor.

It localises to the cytoplasm. It carries out the reaction apo-[ACP] + CoA = holo-[ACP] + adenosine 3',5'-bisphosphate + H(+). Functionally, transfers the 4'-phosphopantetheine moiety from coenzyme A to a Ser of acyl-carrier-protein. This Syntrophus aciditrophicus (strain SB) protein is Holo-[acyl-carrier-protein] synthase.